We begin with the raw amino-acid sequence, 239 residues long: tRNA (guanine-N(1)-)-methyltransferase (239 aa).

Residues glycine 108 and 127-132 (LGDYVL) each bind S-adenosyl-L-methionine.

It belongs to the RNA methyltransferase TrmD family. As to quaternary structure, homodimer.

It is found in the cytoplasm. The enzyme catalyses guanosine(37) in tRNA + S-adenosyl-L-methionine = N(1)-methylguanosine(37) in tRNA + S-adenosyl-L-homocysteine + H(+). In terms of biological role, specifically methylates guanosine-37 in various tRNAs. The protein is tRNA (guanine-N(1)-)-methyltransferase of Streptococcus pneumoniae (strain JJA).